The chain runs to 233 residues: MSSKLSKKKLKSLEYRSKKFDKKSQSLEEHEKKVQQKNEELEKKAADKISRDELPEKQLAQSNDKDKHSVSNPPHKTLKSKRQKGKNNDRKVILFVGNLPKDSSVETLQLHFKRAGQVPSVRIPTDKTSGRQKGYAFVEFINPKTDVISKALKFHHTIYKERKINIELTAGGGGKTEARMNKIKEKNRKWKEEMRQRVASEEQQAGEEKMARKAVADEGLESGIHPDRLRLLQ.

The span at 1 to 10 (MSSKLSKKKL) shows a compositional bias: basic residues. The segment at 1 to 90 (MSSKLSKKKL…KRQKGKNNDR (90 aa)) is disordered. Residues 11 to 56 (KSLEYRSKKFDKKSQSLEEHEKKVQQKNEELEKKAADKISRDELPE) are compositionally biased toward basic and acidic residues. Residues 76-85 (KTLKSKRQKG) show a composition bias toward basic residues. Positions 92–171 (VILFVGNLPK…RKINIELTAG (80 aa)) constitute an RRM domain. 2 stretches are compositionally biased toward basic and acidic residues: residues 194 to 216 (MRQRVASEEQQAGEEKMARKAVA) and 224 to 233 (IHPDRLRLLQ). The tract at residues 194–233 (MRQRVASEEQQAGEEKMARKAVADEGLESGIHPDRLRLLQ) is disordered.

The protein resides in the nucleus. The protein localises to the nucleolus. This is an uncharacterized protein from Schizosaccharomyces pombe (strain 972 / ATCC 24843) (Fission yeast).